Reading from the N-terminus, the 1579-residue chain is DNA-directed RNA polymerase subunit beta' (1579 aa).

The Zn(2+) site is built by C65, C67, C80, and C83. Residues D601, D603, and D605 each coordinate Mg(2+). 4 residues coordinate Zn(2+): C938, C1012, C1019, and C1022.

Belongs to the RNA polymerase beta' chain family. In terms of assembly, the RNAP catalytic core consists of 2 alpha, 1 beta, 1 beta' and 1 omega subunit. When a sigma factor is associated with the core the holoenzyme is formed, which can initiate transcription. Mg(2+) is required as a cofactor. Zn(2+) serves as cofactor.

The enzyme catalyses RNA(n) + a ribonucleoside 5'-triphosphate = RNA(n+1) + diphosphate. DNA-dependent RNA polymerase catalyzes the transcription of DNA into RNA using the four ribonucleoside triphosphates as substrates. The protein is DNA-directed RNA polymerase subunit beta' of Sulfurihydrogenibium sp. (strain YO3AOP1).